The chain runs to 262 residues: uncharacterized protein (262 aa).

7 consecutive transmembrane segments (helical) span residues 42 to 62, 71 to 91, 115 to 135, 145 to 165, 185 to 205, 206 to 226, and 235 to 255; these read IAKF…TVLN, IINI…LLYF, IGLA…MELI, VVSY…CCFN, LWAY…YSNH, PLMI…PFMI, and AYPS…NYAI.

The protein localises to the membrane. This is an uncharacterized protein from Acanthamoeba polyphaga mimivirus (APMV).